Reading from the N-terminus, the 396-residue chain is Elongation factor Tu (396 aa).

Residues 10 to 206 (KPHVNVGTIG…ALDSYIPTPE (197 aa)) form the tr-type G domain. A G1 region spans residues 19–26 (GHVDHGKT). 19 to 26 (GHVDHGKT) provides a ligand contact to GTP. Residue threonine 26 coordinates Mg(2+). The tract at residues 60 to 64 (GITIN) is G2. A G3 region spans residues 81–84 (DCPG). GTP-binding positions include 81–85 (DCPGH) and 136–139 (NKCD). Residues 136–139 (NKCD) are G4. The tract at residues 174–176 (SAL) is G5.

This sequence belongs to the TRAFAC class translation factor GTPase superfamily. Classic translation factor GTPase family. EF-Tu/EF-1A subfamily. Monomer.

It localises to the cytoplasm. The catalysed reaction is GTP + H2O = GDP + phosphate + H(+). GTP hydrolase that promotes the GTP-dependent binding of aminoacyl-tRNA to the A-site of ribosomes during protein biosynthesis. In Aromatoleum aromaticum (strain DSM 19018 / LMG 30748 / EbN1) (Azoarcus sp. (strain EbN1)), this protein is Elongation factor Tu.